The primary structure comprises 538 residues: Fructooligosaccharide ABC transporter substrate-binding protein FusA (538 aa).

The N-terminal stretch at 1-22 (MKFKTFSKSAVLLTASLAVLAA) is a signal peptide. Cys-23 is lipidated: N-palmitoyl cysteine. Cys-23 carries S-diacylglycerol cysteine lipidation. Glu-167 lines the substrate pocket. Positions 215, 217, 219, 221, 223, and 224 each coordinate Ca(2+). Asn-235 is a binding site for substrate. Positions 263, 264, 267, and 268 each coordinate Ca(2+). Positions 314, 318, 353, 384, 419, and 423 each coordinate substrate.

The protein belongs to the bacterial solute-binding protein 1 family. The complex is composed of two ATP-binding proteins (MsmK), two transmembrane proteins (FusB and FusC) and a solute-binding protein (FusA).

The protein resides in the cell membrane. Functionally, part of the ABC transporter complex FusABC-MsmK involved in short- and long-chain fructooligosaccharide (FOS) import. Required for the utilization of long-chain FOSs. Binds kestose, nystose, fructofuranosyl-nystose and inulin, but not sucrose. Has a preference for long-chain FOSs (tetrasaccharides and larger). This Streptococcus pneumoniae serotype 4 (strain ATCC BAA-334 / TIGR4) protein is Fructooligosaccharide ABC transporter substrate-binding protein FusA.